We begin with the raw amino-acid sequence, 400 residues long: Putative zinc-binding protein ORF78 (400 aa).

A disordered region spans residues 9–33 (LPRKRRAVAQPRTRQPPPKVHREDT).

In Ictalurid herpesvirus 1 (strain Auburn) (IcHV-1), this protein is Putative zinc-binding protein ORF78 (ORF78).